We begin with the raw amino-acid sequence, 169 residues long: S-ribosylhomocysteine lyase (169 aa).

Residues histidine 54, histidine 58, and cysteine 128 each contribute to the Fe cation site.

The protein belongs to the LuxS family. Homodimer. Fe cation is required as a cofactor.

It carries out the reaction S-(5-deoxy-D-ribos-5-yl)-L-homocysteine = (S)-4,5-dihydroxypentane-2,3-dione + L-homocysteine. In terms of biological role, involved in the synthesis of autoinducer 2 (AI-2) which is secreted by bacteria and is used to communicate both the cell density and the metabolic potential of the environment. The regulation of gene expression in response to changes in cell density is called quorum sensing. Catalyzes the transformation of S-ribosylhomocysteine (RHC) to homocysteine (HC) and 4,5-dihydroxy-2,3-pentadione (DPD). The polypeptide is S-ribosylhomocysteine lyase (Shewanella putrefaciens (strain CN-32 / ATCC BAA-453)).